Here is a 28-residue protein sequence, read N- to C-terminus: Cytochrome b6-f complex subunit 6 (28 aa).

Residues 2 to 22 (VEYLVILSGMFGLALACFFGL) traverse the membrane as a helical segment.

It belongs to the PetL family. The 4 large subunits of the cytochrome b6-f complex are cytochrome b6, subunit IV (17 kDa polypeptide, PetD), cytochrome f and the Rieske protein, while the 4 small subunits are PetG, PetL, PetM and PetN. The complex functions as a dimer.

Its subcellular location is the plastid. It localises to the cyanelle thylakoid membrane. Its function is as follows. Component of the cytochrome b6-f complex, which mediates electron transfer between photosystem II (PSII) and photosystem I (PSI), cyclic electron flow around PSI, and state transitions. PetL is important for photoautotrophic growth as well as for electron transfer efficiency and stability of the cytochrome b6-f complex. This is Cytochrome b6-f complex subunit 6 from Cyanophora paradoxa.